Reading from the N-terminus, the 436-residue chain is Histidinol dehydrogenase (436 aa).

Tyrosine 136, glutamine 198, and asparagine 221 together coordinate NAD(+). Substrate-binding residues include serine 244, glutamine 266, and histidine 269. Residues glutamine 266 and histidine 269 each coordinate Zn(2+). Residues glutamate 334 and histidine 335 each act as proton acceptor in the active site. 4 residues coordinate substrate: histidine 335, aspartate 368, glutamate 422, and histidine 427. A Zn(2+)-binding site is contributed by aspartate 368. A Zn(2+)-binding site is contributed by histidine 427.

It belongs to the histidinol dehydrogenase family. The cofactor is Zn(2+).

It catalyses the reaction L-histidinol + 2 NAD(+) + H2O = L-histidine + 2 NADH + 3 H(+). Its pathway is amino-acid biosynthesis; L-histidine biosynthesis; L-histidine from 5-phospho-alpha-D-ribose 1-diphosphate: step 9/9. Catalyzes the sequential NAD-dependent oxidations of L-histidinol to L-histidinaldehyde and then to L-histidine. This is Histidinol dehydrogenase from Dehalococcoides mccartyi (strain CBDB1).